The chain runs to 483 residues: Myosin-binding protein H (483 aa).

A compositionally biased stretch (polar residues) spans 1–15 (MTGKATSEASVSTPE). Positions 1-78 (MTGKATSEAS…PEPPSEDVPS (78 aa)) are disordered. Phosphothreonine occurs at positions 2, 6, and 26. Low complexity predominate over residues 41-66 (QEQAPEPQKPQAQDPAAPAASAMPAA). The region spanning 79-174 (APLRLTLEDV…LDQPVHIQEI (96 aa)) is the Fibronectin type-III 1 domain. An Ig-like C2-type 1 domain is found at 178–266 (PKIRVPRHLR…EGLEAKASID (89 aa)). One can recognise a Fibronectin type-III 2 domain in the interval 275-370 (PPSSIKLLDV…TKELAHIHKA (96 aa)). The region spanning 388 to 472 (PSFTQPLADH…INVLGEASVD (85 aa)) is the Ig-like C2-type 2 domain.

The protein belongs to the immunoglobulin superfamily. MyBP family. Skeletal muscle. Expressed at low levels in heart ventricles.

Its function is as follows. Binds to myosin; probably involved in interaction with thick myofilaments in the A-band. The sequence is that of Myosin-binding protein H (Mybph) from Mus musculus (Mouse).